The sequence spans 363 residues: Carbamoyl phosphate synthase small chain (363 aa).

The segment at 1–172 (MTKRILMLED…AFASPGDGKR (172 aa)) is CPSase. The L-glutamine site is built by Ser-46, Gly-220, and Gly-222. One can recognise a Glutamine amidotransferase type-1 domain in the interval 172 to 359 (RVVLVDYGVK…MEMMNGKEEG (188 aa)). The active-site Nucleophile is Cys-247. Residues Leu-248, Gln-251, Asn-289, Gly-291, and Tyr-292 each contribute to the L-glutamine site. Active-site residues include His-332 and Glu-334.

Belongs to the CarA family. Composed of two chains; the small (or glutamine) chain promotes the hydrolysis of glutamine to ammonia, which is used by the large (or ammonia) chain to synthesize carbamoyl phosphate. Tetramer of heterodimers (alpha,beta)4.

It carries out the reaction hydrogencarbonate + L-glutamine + 2 ATP + H2O = carbamoyl phosphate + L-glutamate + 2 ADP + phosphate + 2 H(+). The enzyme catalyses L-glutamine + H2O = L-glutamate + NH4(+). It functions in the pathway amino-acid biosynthesis; L-arginine biosynthesis; carbamoyl phosphate from bicarbonate: step 1/1. Its pathway is pyrimidine metabolism; UMP biosynthesis via de novo pathway; (S)-dihydroorotate from bicarbonate: step 1/3. Functionally, small subunit of the glutamine-dependent carbamoyl phosphate synthetase (CPSase). CPSase catalyzes the formation of carbamoyl phosphate from the ammonia moiety of glutamine, carbonate, and phosphate donated by ATP, constituting the first step of 2 biosynthetic pathways, one leading to arginine and/or urea and the other to pyrimidine nucleotides. The small subunit (glutamine amidotransferase) binds and cleaves glutamine to supply the large subunit with the substrate ammonia. In Listeria monocytogenes serotype 4b (strain F2365), this protein is Carbamoyl phosphate synthase small chain.